Reading from the N-terminus, the 239-residue chain is MYYCNRDNCNQTDNAKDKAHPRNLIPELCRQFYNLGWVTGTGGGISLKYGDEIYIAPSGVQKERIQPDDLFVCDIDEKDISCPPPYRNLKKSQCTPLFMNAYTMRDAGAVIHTHSKAAVMATLMFPGKEFLITHQEMIKGIKKGTSGGYYRYNDMLAVPIVENTPEEKDLKERMARAMTEYPDTCAVLVRRHGVYVWGDTWEKAKTMCECYDYLFDIAVQMKQHGLDPSAVPTEEKGIV.

Cys-94 contributes to the substrate binding site. Zn(2+) contacts are provided by His-112 and His-114. Glu-136 (proton donor/acceptor) is an active-site residue. His-192 contributes to the Zn(2+) binding site.

It belongs to the aldolase class II family. MtnB subfamily. Requires Zn(2+) as cofactor.

The protein resides in the cytoplasm. It carries out the reaction 5-(methylsulfanyl)-D-ribulose 1-phosphate = 5-methylsulfanyl-2,3-dioxopentyl phosphate + H2O. The protein operates within amino-acid biosynthesis; L-methionine biosynthesis via salvage pathway; L-methionine from S-methyl-5-thio-alpha-D-ribose 1-phosphate: step 2/6. Its function is as follows. Catalyzes the dehydration of methylthioribulose-1-phosphate (MTRu-1-P) into 2,3-diketo-5-methylthiopentyl-1-phosphate (DK-MTP-1-P). Functions in the methionine salvage pathway. May play a role in apoptosis. The sequence is that of Methylthioribulose-1-phosphate dehydratase from Xenopus laevis (African clawed frog).